Reading from the N-terminus, the 389-residue chain is 26S proteasome non-ATPase regulatory subunit 6 (389 aa).

In terms of domain architecture, PCI spans 193–361; sequence DFKQAAELFL…EIVETNRPDS (169 aa).

Belongs to the proteasome subunit S10 family. As to quaternary structure, component of the 19S proteasome regulatory particle complex. The 26S proteasome consists of a 20S core particle (CP) and two 19S regulatory subunits (RP). The regulatory particle is made of a lid composed of 9 subunits including PSMD6, a base containing 6 ATPases and few additional components.

In terms of biological role, component of the 26S proteasome, a multiprotein complex involved in the ATP-dependent degradation of ubiquitinated proteins. This complex plays a key role in the maintenance of protein homeostasis by removing misfolded or damaged proteins, which could impair cellular functions, and by removing proteins whose functions are no longer required. Therefore, the proteasome participates in numerous cellular processes, including cell cycle progression, apoptosis, or DNA damage repair. The polypeptide is 26S proteasome non-ATPase regulatory subunit 6 (Psmd6) (Mus musculus (Mouse)).